A 121-amino-acid chain; its full sequence is Griffithsin (121 aa).

The Jacalin-type lectin domain maps to 1–120 (SLTHRKFGGS…LDSLDIYYEQ (120 aa)).

Functionally, mixed specificity lectin with anti-HIV activity. Binds to HIV envelope glycoproteins, including exterior membrane glycoprotein gp120, and inhibits viral entry into cells. Binding to gp120 is dependent on gp120 being glycosylated, and is inhibited by mannose, glucose and N-acetylglucosamine. The polypeptide is Griffithsin (Griffithsia sp. (strain Q66D336) (Red alga)).